A 235-amino-acid polypeptide reads, in one-letter code: 2,3-bisphosphoglycerate-dependent phosphoglycerate mutase (235 aa).

Substrate contacts are provided by residues 8–15 (RHGESIWN), 21–22 (TG), Arg58, 110–113 (ERYY), Lys121, 137–138 (RR), and 181–182 (GN). His9 acts as the Tele-phosphohistidine intermediate in catalysis. Glu110 serves as the catalytic Proton donor/acceptor.

Belongs to the phosphoglycerate mutase family. BPG-dependent PGAM subfamily.

It catalyses the reaction (2R)-2-phosphoglycerate = (2R)-3-phosphoglycerate. It participates in carbohydrate degradation; glycolysis; pyruvate from D-glyceraldehyde 3-phosphate: step 3/5. In terms of biological role, catalyzes the interconversion of 2-phosphoglycerate and 3-phosphoglycerate. This chain is 2,3-bisphosphoglycerate-dependent phosphoglycerate mutase, found in Methanococcus vannielii (strain ATCC 35089 / DSM 1224 / JCM 13029 / OCM 148 / SB).